The chain runs to 642 residues: Zinc finger protein 14 (642 aa).

The KRAB domain occupies 4-76 (VSFEDVAVNF…MVERLCESRK (73 aa)). The segment at 103–125 (HECSFCGRDFMHHSSLNRHMRSH) adopts a C2H2-type 1 zinc-finger fold. The C2H2-type 2; degenerate zinc finger occupies 141-163 (RKHKAVEKTFSYHHCFRKHERTH). The C2H2-type 3 zinc-finger motif lies at 169-191 (YECKQCGKAFIYYQPFQRHERTH). The C2H2-type 4; atypical zinc-finger motif lies at 197–217 (YECKQCGKTFIYYQSFQQHAH). 15 consecutive C2H2-type zinc fingers follow at residues 223 to 245 (YECKQCGKAFICYQSFQRHERTH), 251 to 273 (YECKQCGKAFSCPTYFRTHERTH), 279 to 301 (YKCKECGKAFSFLSSFRRHKRTH), 307 to 329 (YECKECGKAFFYSASFRAHVITH), 335 to 357 (YKCKECGKAFNSSNSCRVHERTH), 363 to 385 (YECKQCGKSFSWSISLRLHERTH), 391 to 413 (YECKQCHKTFSFSSSLREHETTH), 419 to 441 (YECKQCGKTFSFSSSLQRHERTH), 447 to 469 (YECKQCGKAFRCSSYFRIHERSH), 475 to 497 (YECKQCGKVFIRSSSFRLHERTH), 503 to 525 (YECKLCSKTFSFSSSLREHEKIH), 531 to 553 (FECKQCGKAFLRSSQIRLHERTH), 559 to 581 (YQCKQCGKAFISSSKFRMHERTH), 587 to 609 (YRCKQCGKAFRFSSSVRIHERSH), and 615 to 637 (YECKQCGKAFISSSHFRLHERTH).

The protein belongs to the krueppel C2H2-type zinc-finger protein family.

Its subcellular location is the nucleus. May be involved in transcriptional regulation. This is Zinc finger protein 14 (ZNF14) from Pongo abelii (Sumatran orangutan).